Here is a 242-residue protein sequence, read N- to C-terminus: Purine nucleoside phosphorylase PA4543 (242 aa).

His-69, Cys-103, and His-120 together coordinate Zn(2+).

Belongs to the purine nucleoside phosphorylase YfiH/LACC1 family. As to quaternary structure, homodimer. Requires Cu(2+) as cofactor. The cofactor is Zn(2+).

It catalyses the reaction adenosine + phosphate = alpha-D-ribose 1-phosphate + adenine. The enzyme catalyses S-methyl-5'-thioadenosine + phosphate = 5-(methylsulfanyl)-alpha-D-ribose 1-phosphate + adenine. The catalysed reaction is inosine + phosphate = alpha-D-ribose 1-phosphate + hypoxanthine. It carries out the reaction adenosine + H2O + H(+) = inosine + NH4(+). Its function is as follows. Purine nucleoside enzyme that catalyzes the phosphorolysis of adenosine and inosine nucleosides, yielding D-ribose 1-phosphate and the respective free bases, adenine and hypoxanthine. Also catalyzes the phosphorolysis of S-methyl-5'-thioadenosine into adenine and S-methyl-5-thio-alpha-D-ribose 1-phosphate. Also has adenosine deaminase activity. The protein is Purine nucleoside phosphorylase PA4543 of Pseudomonas aeruginosa (strain ATCC 15692 / DSM 22644 / CIP 104116 / JCM 14847 / LMG 12228 / 1C / PRS 101 / PAO1).